A 295-amino-acid chain; its full sequence is MAITAQMVKELREKTGAGMMDCKKALTETNGDMEKAIDFLREKGIAKAAKKADRIAAEGLTFIETNGNDALILELNSETDFVAKNEGFQALIKELAAHLLANKPANVEEAMTQTIEGGKTVEEHINEAIAKIGEKLTLRRFEIVSKTDADAFGAYLHMGGRIGVLTVLEGSTDEAAAKDVAMHIAAVNPKYIDRDAVTAEEVEHERQVLTQQALNEGKPEKIVAKMVEGRLGKFFEEICLLDQAFVKNPDMKVRQFVESKGGTLKGFVRYAVGEGIEKREDNFAEEVMNQVKGSN.

The interval 79–82 is involved in Mg(2+) ion dislocation from EF-Tu; it reads TDFV.

Belongs to the EF-Ts family.

It localises to the cytoplasm. In terms of biological role, associates with the EF-Tu.GDP complex and induces the exchange of GDP to GTP. It remains bound to the aminoacyl-tRNA.EF-Tu.GTP complex up to the GTP hydrolysis stage on the ribosome. In Bacillus cereus (strain G9842), this protein is Elongation factor Ts.